The following is a 92-amino-acid chain: Small ribosomal subunit protein uS15c (92 aa).

It belongs to the universal ribosomal protein uS15 family. Part of the 30S ribosomal subunit.

It localises to the plastid. The protein resides in the chloroplast. In Guizotia abyssinica (Niger), this protein is Small ribosomal subunit protein uS15c (rps15).